The following is a 118-amino-acid chain: Small ribosomal subunit protein uS13 (118 aa).

The interval histidine 91–alanine 118 is disordered.

The protein belongs to the universal ribosomal protein uS13 family. Part of the 30S ribosomal subunit. Forms a loose heterodimer with protein S19. Forms two bridges to the 50S subunit in the 70S ribosome.

Located at the top of the head of the 30S subunit, it contacts several helices of the 16S rRNA. In the 70S ribosome it contacts the 23S rRNA (bridge B1a) and protein L5 of the 50S subunit (bridge B1b), connecting the 2 subunits; these bridges are implicated in subunit movement. Contacts the tRNAs in the A and P-sites. This Francisella tularensis subsp. tularensis (strain FSC 198) protein is Small ribosomal subunit protein uS13.